A 240-amino-acid polypeptide reads, in one-letter code: MKIDYLTLFPEMFDVLNHSIMKRAQEKGIVELNTVNFRDYSGNKHNQVDDYPYGGGQGMVLKPEPIFNAMNAIDKTSKTRVILMCPQGKPFTQQVAESLAQEEHLVFICGHYEGYDERIREHLVTDELSIGDYVLTGGELAAITMTDAIVRLIPESIKEESHLDDSFSTGLLEYPQYTRPADYNGMKVPDVLLSGNHKHIESWRHEMRLKRTFERRPDLLEHYPLTQSDKEYLEHLKRDK.

S-adenosyl-L-methionine contacts are provided by residues glycine 110 and 130-135; that span reads IGDYVL.

Belongs to the RNA methyltransferase TrmD family. In terms of assembly, homodimer.

The protein localises to the cytoplasm. It carries out the reaction guanosine(37) in tRNA + S-adenosyl-L-methionine = N(1)-methylguanosine(37) in tRNA + S-adenosyl-L-homocysteine + H(+). Functionally, specifically methylates guanosine-37 in various tRNAs. The protein is tRNA (guanine-N(1)-)-methyltransferase of Macrococcus caseolyticus (strain JCSC5402) (Macrococcoides caseolyticum).